The following is a 362-amino-acid chain: Ribosomal RNA large subunit methyltransferase M (362 aa).

S-adenosyl-L-methionine-binding positions include serine 194, 227–230 (CPGG), aspartate 246, aspartate 266, and aspartate 284. Lysine 313 (proton acceptor) is an active-site residue.

Belongs to the class I-like SAM-binding methyltransferase superfamily. RNA methyltransferase RlmE family. RlmM subfamily. In terms of assembly, monomer.

It is found in the cytoplasm. It carries out the reaction cytidine(2498) in 23S rRNA + S-adenosyl-L-methionine = 2'-O-methylcytidine(2498) in 23S rRNA + S-adenosyl-L-homocysteine + H(+). In terms of biological role, catalyzes the 2'-O-methylation at nucleotide C2498 in 23S rRNA. In Aggregatibacter aphrophilus (strain NJ8700) (Haemophilus aphrophilus), this protein is Ribosomal RNA large subunit methyltransferase M.